Here is a 227-residue protein sequence, read N- to C-terminus: Translation initiation factor 6 (227 aa).

This sequence belongs to the eIF-6 family.

Binds to the 50S ribosomal subunit and prevents its association with the 30S ribosomal subunit to form the 70S initiation complex. The sequence is that of Translation initiation factor 6 from Pyrococcus abyssi (strain GE5 / Orsay).